The following is a 338-amino-acid chain: NADH-quinone oxidoreductase subunit H (338 aa).

Transmembrane regions (helical) follow at residues 22–42 (VVQA…MSFI), 96–116 (VAMA…ALGV), 121–141 (IGLL…LFGG), 161–181 (ISYE…AGSF), 193–213 (VWFI…GVAV), 249–269 (YVNV…GWLA), 277–297 (FVPP…MFVL), and 315–335 (WKIC…VILM).

The protein belongs to the complex I subunit 1 family. As to quaternary structure, NDH-1 is composed of 14 different subunits. Subunits NuoA, H, J, K, L, M, N constitute the membrane sector of the complex.

It localises to the cell inner membrane. It carries out the reaction a quinone + NADH + 5 H(+)(in) = a quinol + NAD(+) + 4 H(+)(out). NDH-1 shuttles electrons from NADH, via FMN and iron-sulfur (Fe-S) centers, to quinones in the respiratory chain. The immediate electron acceptor for the enzyme in this species is believed to be ubiquinone. Couples the redox reaction to proton translocation (for every two electrons transferred, four hydrogen ions are translocated across the cytoplasmic membrane), and thus conserves the redox energy in a proton gradient. This subunit may bind ubiquinone. The protein is NADH-quinone oxidoreductase subunit H of Acinetobacter baumannii (strain ATCC 17978 / DSM 105126 / CIP 53.77 / LMG 1025 / NCDC KC755 / 5377).